The following is a 270-amino-acid chain: UPF0354 protein BCE_4835 (270 aa).

It belongs to the UPF0354 family.

The protein is UPF0354 protein BCE_4835 of Bacillus cereus (strain ATCC 10987 / NRS 248).